The primary structure comprises 165 residues: Ribosome maturation factor RimM (165 aa).

The 72-residue stretch at 94–165 (EDEFYIADLN…YVILNYQTKV (72 aa)) folds into the PRC barrel domain.

This sequence belongs to the RimM family. In terms of assembly, binds ribosomal protein uS19.

Its subcellular location is the cytoplasm. In terms of biological role, an accessory protein needed during the final step in the assembly of 30S ribosomal subunit, possibly for assembly of the head region. Essential for efficient processing of 16S rRNA. May be needed both before and after RbfA during the maturation of 16S rRNA. It has affinity for free ribosomal 30S subunits but not for 70S ribosomes. This chain is Ribosome maturation factor RimM, found in Rickettsia prowazekii (strain Madrid E).